Reading from the N-terminus, the 187-residue chain is Ribosome-recycling factor (187 aa).

Belongs to the RRF family.

The protein localises to the cytoplasm. Functionally, responsible for the release of ribosomes from messenger RNA at the termination of protein biosynthesis. May increase the efficiency of translation by recycling ribosomes from one round of translation to another. This Lactiplantibacillus plantarum (strain ATCC BAA-793 / NCIMB 8826 / WCFS1) (Lactobacillus plantarum) protein is Ribosome-recycling factor.